The chain runs to 314 residues: Olfactory receptor 5B17 (314 aa).

At 1–23 the chain is on the extracellular side; it reads MENNTEVSEFILLGLTNAPELQV. Asparagine 3 carries an N-linked (GlcNAc...) asparagine glycan. The chain crosses the membrane as a helical span at residues 24 to 44; the sequence is PLFIMFTLIYLITLTGNLGMI. Residues 45–52 lie on the Cytoplasmic side of the membrane; sequence ILILLDSH. Residues 53–73 form a helical membrane-spanning segment; that stretch reads LHTPMYFFLSNLSLAGIGYSS. Residues 74–97 are Extracellular-facing; sequence AVTPKVLTGLLIEDKAISYSACAA. A disulfide bridge links cysteine 95 with cysteine 187. A helical membrane pass occupies residues 98-118; sequence QMFFCAVFATVENYLLSSMAY. Residues 119-137 lie on the Cytoplasmic side of the membrane; the sequence is DRYAAVCNPLHYTTTMTTR. Residues 138-158 traverse the membrane as a helical segment; it reads VCACLAIGCYVIGFLNASIQI. The Extracellular portion of the chain corresponds to 159 to 194; it reads GDTFRLSFCMSNVIHHFFCDKPAVITLTCSEKHISE. The chain crosses the membrane as a helical span at residues 195 to 215; sequence LILVLISSFNVFFALLVTLIS. Topologically, residues 216 to 235 are cytoplasmic; that stretch reads YLFILITILKRHTGKGYQKP. The helical transmembrane segment at 236–256 threads the bilayer; that stretch reads LSTCGSHLIAIFLFYITVIIM. Residues 257–269 are Extracellular-facing; it reads YIRPSSSHSMDTD. Residues 270–290 traverse the membrane as a helical segment; the sequence is KIASVFYTMIIPMLSPIVYTL. Over 291–314 the chain is Cytoplasmic; sequence RNKDVKNAFMKVVEKAKYSLDSVF.

It belongs to the G-protein coupled receptor 1 family.

The protein localises to the cell membrane. Functionally, odorant receptor. The chain is Olfactory receptor 5B17 (OR5B17) from Homo sapiens (Human).